A 311-amino-acid polypeptide reads, in one-letter code: Formimidoylglutamase (311 aa).

The Mn(2+) site is built by H122, D151, H153, D155, C242, and D244.

Belongs to the arginase family. Mn(2+) is required as a cofactor.

It carries out the reaction N-formimidoyl-L-glutamate + H2O = formamide + L-glutamate. The protein operates within amino-acid degradation; L-histidine degradation into L-glutamate; L-glutamate from N-formimidoyl-L-glutamate (hydrolase route): step 1/1. In terms of biological role, catalyzes the conversion of N-formimidoyl-L-glutamate to L-glutamate and formamide. This is Formimidoylglutamase from Pseudomonas paraeruginosa (strain DSM 24068 / PA7) (Pseudomonas aeruginosa (strain PA7)).